Consider the following 463-residue polypeptide: Putative F-box protein At3g29830 (463 aa).

In terms of domain architecture, F-box spans 7-55 (RDRISSLPDVVLVMILSFLSFKDNVKTSILSKRWRNICYEAKNISFKES).

In Arabidopsis thaliana (Mouse-ear cress), this protein is Putative F-box protein At3g29830.